A 462-amino-acid polypeptide reads, in one-letter code: Serine--tRNA ligase, cytoplasmic (462 aa).

An L-serine-binding site is contributed by 246–248 (TSE). ATP-binding positions include 279–281 (RRE) and Val295. Residue Glu302 coordinates L-serine. 366-369 (ELVS) contacts ATP. Thr404 is an L-serine binding site.

It belongs to the class-II aminoacyl-tRNA synthetase family. Type-1 seryl-tRNA synthetase subfamily. Homodimer. The tRNA molecule binds across the dimer.

It is found in the cytoplasm. It localises to the cytosol. The enzyme catalyses tRNA(Ser) + L-serine + ATP = L-seryl-tRNA(Ser) + AMP + diphosphate + H(+). Functionally, catalyzes the attachment of serine to tRNA(Ser) in a two-step reaction: serine is first activated by ATP to form Ser-AMP and then transferred to the acceptor end of tRNA(Ser). This Candida albicans (strain SC5314 / ATCC MYA-2876) (Yeast) protein is Serine--tRNA ligase, cytoplasmic (SES1).